A 131-amino-acid polypeptide reads, in one-letter code: MSWQTYVDDHLMCDIEGNHLSSAAILGHDGTVWAQSPSFPQLKPEEVSAIMKDFNEPGSLAPTGLHLGGTKYMVIQGEPGDVIRGKKGPGGVTIKKTNQALIIGIYGEPMTPGQCNMVVERIGDYLVEQGM.

This sequence belongs to the profilin family. As to quaternary structure, occurs in many kinds of cells as a complex with monomeric actin in a 1:1 ratio.

The protein localises to the cytoplasm. The protein resides in the cytoskeleton. In terms of biological role, binds to actin and affects the structure of the cytoskeleton. At high concentrations, profilin prevents the polymerization of actin, whereas it enhances it at low concentrations. By binding to PIP2, it inhibits the formation of IP3 and DG. The protein is Profilin of Chenopodium album (Fat hen).